Consider the following 684-residue polypeptide: Leishmanolysin-like peptidase (684 aa).

His257 lines the Zn(2+) pocket. The active site involves Glu258. Positions 261 and 364 each coordinate Zn(2+).

This sequence belongs to the peptidase M8 family. Zn(2+) serves as cofactor.

It localises to the cytoplasm. Functionally, essential for the coordination of mitotic progression, and also plays a role in cell migration. The polypeptide is Leishmanolysin-like peptidase (Drosophila pseudoobscura pseudoobscura (Fruit fly)).